The sequence spans 442 residues: Protein bag of marbles (442 aa).

Residues 201-250 are required for interaction with ubiquitin; it reads FDMPVKSTMPKSLNVRYQLQVLCTKVERFLVQQRRTLEANRHFDFEKYDE. The disordered stretch occupies residues 408–442; the sequence is VSMEQPSASEEEFEETEEVPSSPPRHTGRVPRFRS. Residues 416 to 425 are compositionally biased toward acidic residues; the sequence is SEEEFEETEE. The segment covering 433–442 has biased composition (basic residues); the sequence is HTGRVPRFRS.

Interacts (via central region) with ubiquitin. Interacts (via C-terminus) with otu (via OTU domain); the interaction enhances otu aggregation into amyloid-like structures and enhances its deubiquitinase activity. Together with otu interacts with CycA/cyclin-A (via C-terminus); the interaction stabilizes CycA by promoting and enhancing otu dependent deubiquitination of CycA. Together with otu interacts with Traf6. Part of a complex composed of at least tut, bam and bgcn; complex formation does not require RNA. Interacts (via C-terminus) with bgcn; the interaction is direct and is not disrupted by eIF4A. Interacts with eIF4A (via multiple contacts); the interaction is direct and is not disrupted by bgcn. Interacts (via N-terminus) with tut; the interaction is direct and mediates the interaction between tut and bgcn. As part of the bam-bgcn-tut complex associates with twin; may recruit the CCR4-NOT1 deadenylation complex to mRNA 3'-UTRs to mediate post-transcriptional regulation of expression. Part of a complex composed of at least mei-P26, bam, bgcn and Sxl; this complex is involved in translational repression of nanos mRNA. In terms of processing, ubiquitinated (C-terminal region). As to expression, in cystoblasts and/or very early cystocytes in testis (at protein level); expression levels are regulated by mei-P26. In cystoblasts and/or very early cystocytes in ovary. Expressed in the gut; expression levels increase with age.

It is found in the cytoplasm. Regulatory component of a deubiquitinase complex consisting of bam and otu. The complex deubiquitinates K63-linked polyubiquitinated proteins, antagonizing the ubiquitination activity of Traf6 and regulating the IMD immune signaling pathway. Otu-bam deubiquitinase activity is regulated by Traf6 dependent immune signaling regulation of bam expression levels; this forms a feedback loop that regulates the IMD immune signaling pathway and balances gut immune activity during aging. The complex deubiquitinates and stabilizes CycA/cyclin-A to regulate CycA-dependent differentiation. Required to initiate both male and female gametogenesis. Part of a complex with bgcn involved in 3'-UTR-dependent translational repression of a subset of mRNAs, including those for mei-P26, nanos and shg/E-cadherin. Repression of mei-P26 is targeted by let-7 miRNA. Involved in a regulatory cascade with mei-P26 to control the progression of cystocytes through transit amplification and the switch to spermatocyte differentiation; mei-P26 facilitates bam accumulation, which in turn represses translation of mei-P26. Forms a complex with tut and bgcn involved in 3'-UTR-dependent post-transcriptional repression of several 3'-RNA processing factors, which promotes germline stem cell lineage differentiation and mitosis-to-meiosis transition. This chain is Protein bag of marbles, found in Drosophila melanogaster (Fruit fly).